The chain runs to 378 residues: N-acetyllactosaminide beta-1,3-N-acetylglucosaminyltransferase 4 (378 aa).

Residues 1–28 (MLPPQPSAAHQGRGGRSGLLPKGPAMLC) lie on the Cytoplasmic side of the membrane. Residues 29 to 49 (RLCWLVSYSLAVLLLGCLLFL) form a helical; Signal-anchor for type II membrane protein membrane-spanning segment. Residues 50–378 (RKAAKPAGDP…KCAAGPIPQR (329 aa)) are Lumenal-facing. The disordered stretch occupies residues 59 to 81 (PTAHQPFWAPPTPRHSRCPPNHT). A glycan (N-linked (GlcNAc...) asparagine) is linked at Asn-192.

This sequence belongs to the glycosyltransferase 31 family. In terms of tissue distribution, mainly expressed in brain tissues such as whole brain, hippocampus, amygdala, cerebellum and caudate nucleus. Also expressed in colon, esophagus and kidney.

The protein resides in the golgi apparatus membrane. It catalyses the reaction a beta-D-galactosyl-(1-&gt;4)-N-acetyl-beta-D-glucosaminyl derivative + UDP-N-acetyl-alpha-D-glucosamine = an N-acetyl-beta-D-glucosaminyl-(1-&gt;3)-beta-D-galactosyl-(1-&gt;4)-N-acetyl-beta-D-glucosaminyl derivative + UDP + H(+). It participates in protein modification; protein glycosylation. Beta-1,3-N-acetylglucosaminyltransferase involved in the synthesis of poly-N-acetyllactosamine. Has activity for type 2 oligosaccharides. The chain is N-acetyllactosaminide beta-1,3-N-acetylglucosaminyltransferase 4 (B3GNT4) from Homo sapiens (Human).